The primary structure comprises 464 residues: Cysteine--tRNA ligase (464 aa).

Zn(2+) is bound at residue cysteine 28. Positions valine 30–histidine 40 match the 'HIGH' region motif. Residues cysteine 209, histidine 234, and glutamate 238 each coordinate Zn(2+). A 'KMSKS' region motif is present at residues lysine 266 to serine 270. Lysine 269 is an ATP binding site.

The protein belongs to the class-I aminoacyl-tRNA synthetase family. As to quaternary structure, monomer. Zn(2+) is required as a cofactor.

The protein localises to the cytoplasm. It catalyses the reaction tRNA(Cys) + L-cysteine + ATP = L-cysteinyl-tRNA(Cys) + AMP + diphosphate. In Buchnera aphidicola subsp. Acyrthosiphon pisum (strain APS) (Acyrthosiphon pisum symbiotic bacterium), this protein is Cysteine--tRNA ligase (cysS).